The sequence spans 262 residues: MNFCSKKKILKQCFFEFLGTGLIIFLGISSLVVSKLTNFHFNHCEISCIWGLGVFISICFCSSVSGAHLNPAITIFLFLSSQFNKKKVIPYILSQISGTFFFTFLIYLIFNNLLNSFESKYNIVRGTKKSLELASLFCVFPKENYNFIHDFILEILIGIIFIIILMKLSEKNNLFKFYKFINPFLIGTLVIIINLFLTSYSNITLNPARDLGPRIFLSLIGWGKLAFTGDDNIIFPYFLIPTIAPIIGINLGGWIYILYIKK.

Over 1 to 7 the chain is Cytoplasmic; sequence MNFCSKK. The chain crosses the membrane as a helical span at residues 8-36; the sequence is KILKQCFFEFLGTGLIIFLGISSLVVSKL. Residues 37–41 lie on the Extracellular side of the membrane; that stretch reads TNFHF. The chain crosses the membrane as a helical span at residues 42 to 62; sequence NHCEISCIWGLGVFISICFCS. At 63–65 the chain is on the cytoplasmic side; the sequence is SVS. The stretch at 66-69 is an intramembrane region; sequence GAHL. An NPA 1 motif is present at residues 70-72; it reads NPA. An intramembrane region (helical) is located at residues 70–80; that stretch reads NPAITIFLFLS. The Cytoplasmic portion of the chain corresponds to 81–86; the sequence is SQFNKK. The helical transmembrane segment at 87-110 threads the bilayer; that stretch reads KVIPYILSQISGTFFFTFLIYLIF. The Extracellular portion of the chain corresponds to 111 to 145; it reads NNLLNSFESKYNIVRGTKKSLELASLFCVFPKENY. Residues 146–171 form a helical membrane-spanning segment; it reads NFIHDFILEILIGIIFIIILMKLSEK. Residues 172–180 lie on the Cytoplasmic side of the membrane; the sequence is NNLFKFYKF. A helical membrane pass occupies residues 181–197; sequence INPFLIGTLVIIINLFL. Over 198–201 the chain is Extracellular; it reads TSYS. An intramembrane segment occupies 202–205; the sequence is NITL. Residues 206–208 carry the NPA 2 motif; the sequence is NPA. An intramembrane region (helical) is located at residues 206–219; the sequence is NPARDLGPRIFLSL. Residues 220 to 234 lie on the Extracellular side of the membrane; sequence IGWGKLAFTGDDNII. A helical membrane pass occupies residues 235-259; the sequence is FPYFLIPTIAPIIGINLGGWIYILY. The Cytoplasmic segment spans residues 260 to 262; it reads IKK.

Belongs to the MIP/aquaporin (TC 1.A.8) family.

The protein resides in the cell membrane. The enzyme catalyses glycerol(in) = glycerol(out). Its function is as follows. Mediates glycerol diffusion across the cytoplasmic membrane via a pore-type mechanism. This Buchnera aphidicola subsp. Schizaphis graminum (strain Sg) protein is Glycerol uptake facilitator protein (glpF).